A 463-amino-acid polypeptide reads, in one-letter code: Trigger factor (463 aa).

Residues 162–243 enclose the PPIase FKBP-type domain; sequence GDVVTLDLEA…VSQVAARELP (82 aa). Residues 427 to 463 form a disordered region; it reads TNGEIVDLDDEDETESTPETTEAAEAAEESTEDKPEA. Residues 432–442 are compositionally biased toward acidic residues; the sequence is VDLDDEDETES.

The protein belongs to the FKBP-type PPIase family. Tig subfamily.

The protein localises to the cytoplasm. The catalysed reaction is [protein]-peptidylproline (omega=180) = [protein]-peptidylproline (omega=0). Its function is as follows. Involved in protein export. Acts as a chaperone by maintaining the newly synthesized protein in an open conformation. Functions as a peptidyl-prolyl cis-trans isomerase. The sequence is that of Trigger factor from Streptomyces avermitilis (strain ATCC 31267 / DSM 46492 / JCM 5070 / NBRC 14893 / NCIMB 12804 / NRRL 8165 / MA-4680).